A 376-amino-acid polypeptide reads, in one-letter code: Geranylgeranyl transferase type-1 subunit beta (376 aa).

4 PFTB repeats span residues 128-179, 192-231, 259-301, and 310-353; these read KRSL…YICG, TEKLLGYIMSQQCYNGAFGAHNEPHSGYTSCALSTLALLS, MKFE…HLLT, and TELV…ALIE. Geranylgeranyl diphosphate is bound by residues 216 to 218 and 280 to 283; these read HSG and RENK. 2 residues coordinate Zn(2+): Asp286 and Cys288. 289–292 provides a ligand contact to geranylgeranyl diphosphate; that stretch reads YAFW. His341 lines the Zn(2+) pocket.

This sequence belongs to the protein prenyltransferase subunit beta family. As to quaternary structure, heterodimer of an alpha (RAM2) and a beta (CDC43) subunit. Zn(2+) is required as a cofactor. It depends on Mg(2+) as a cofactor.

It localises to the cytoplasm. It carries out the reaction geranylgeranyl diphosphate + L-cysteinyl-[protein] = S-geranylgeranyl-L-cysteinyl-[protein] + diphosphate. Its function is as follows. Catalyzes the transfer of a geranyl-geranyl moiety from geranyl-geranyl diphosphate to proteins having the C-terminal sequence Cys-Ile-Ile-Leu or Cys-Val-Leu-Leu. Acts, among other substrates, on Rho1 and Rho2 and CDC42 proteins. Participates in a RAS-like C-terminal modification of proteins involved in nuclear division and bud growth. It is involved in bud positioning and cell polarity. The beta subunit is responsible for isoprenoid and peptide-binding. The sequence is that of Geranylgeranyl transferase type-1 subunit beta (CDC43) from Saccharomyces cerevisiae (strain ATCC 204508 / S288c) (Baker's yeast).